Here is a 770-residue protein sequence, read N- to C-terminus: Endothelin-converting enzyme 1 (770 aa).

Over 1–68 the chain is Cytoplasmic; that stretch reads MRGVWPPPVS…WAARTQVEKR (68 aa). Thr25 bears the Phosphothreonine mark. Residues 69–89 traverse the membrane as a helical; Signal-anchor for type II membrane protein segment; sequence LVVLVVLLAAGLVACLAALGI. The Extracellular segment spans residues 90–770; it reads QYQTRSPSVC…MNPPHKCEVW (681 aa). The 673-residue stretch at 98-770 folds into the Peptidase M13 domain; sequence VCLSEACVSV…MNPPHKCEVW (673 aa). Cystine bridges form between Cys99-Cys104, Cys122-Cys755, Cys130-Cys715, Cys185-Cys435, and Cys644-Cys767. Residues Asn166, Asn187, Asn210, Asn270, Asn316, Asn362, Asn383, and Asn539 are each glycosylated (N-linked (GlcNAc...) asparagine). A Zn(2+)-binding site is contributed by His607. The active site involves Glu608. Position 611 (His611) interacts with Zn(2+). Asn632 and Asn651 each carry an N-linked (GlcNAc...) asparagine glycan. Glu667 contacts Zn(2+). Catalysis depends on Asp671, which acts as the Proton donor.

It belongs to the peptidase M13 family. As to quaternary structure, homodimer; disulfide-linked. Interacts with PPP1R16B. Interacts with TSPAN8; this interaction recruits the endothelin converting enzyme ECE1 to tetraspanin-enriched microdomains and positively modulates its enzymatic activity. The cofactor is Zn(2+). As to expression, all isoforms are expressed in umbilical vein endothelial cells, polynuclear neutrophils, fibroblasts, atrium cardiomyocytes and ventricles. Isoforms A, B and C are also expressed in placenta, lung, heart, adrenal gland and phaeochromocytoma; isoforms A and C in liver, testis and small intestine; isoform B, C and D in endothelial cells and umbilical vein smooth muscle cells; isoforms C and D in saphenous vein cells, and isoform C in kidney.

The protein resides in the cell membrane. It catalyses the reaction Hydrolysis of the 21-Trp-|-Val-22 bond in big endothelin to form endothelin 1.. Its activity is regulated as follows. Inhibited by phosphoramidon. Activated by K49-P1-20, a twenty-residue synthetic peptide shortened from the snake B.asper myotoxin II. Its function is as follows. Converts big endothelin-1 to endothelin-1. The chain is Endothelin-converting enzyme 1 (ECE1) from Homo sapiens (Human).